A 241-amino-acid chain; its full sequence is tRNA (guanine-N(1)-)-methyltransferase (241 aa).

Residues glycine 123 and 143–148 contribute to the S-adenosyl-L-methionine site; that span reads IGDYVL.

This sequence belongs to the RNA methyltransferase TrmD family. As to quaternary structure, homodimer.

It localises to the cytoplasm. The catalysed reaction is guanosine(37) in tRNA + S-adenosyl-L-methionine = N(1)-methylguanosine(37) in tRNA + S-adenosyl-L-homocysteine + H(+). In terms of biological role, specifically methylates guanosine-37 in various tRNAs. The sequence is that of tRNA (guanine-N(1)-)-methyltransferase from Roseobacter denitrificans (strain ATCC 33942 / OCh 114) (Erythrobacter sp. (strain OCh 114)).